Consider the following 73-residue polypeptide: Translation initiation factor IF-1 (73 aa).

The 72-residue stretch at 1-72 folds into the S1-like domain; that stretch reads MAKEDHIEMA…SKGRIIFRDK (72 aa).

The protein belongs to the IF-1 family. Component of the 30S ribosomal translation pre-initiation complex which assembles on the 30S ribosome in the order IF-2 and IF-3, IF-1 and N-formylmethionyl-tRNA(fMet); mRNA recruitment can occur at any time during PIC assembly.

It localises to the cytoplasm. Functionally, one of the essential components for the initiation of protein synthesis. Stabilizes the binding of IF-2 and IF-3 on the 30S subunit to which N-formylmethionyl-tRNA(fMet) subsequently binds. Helps modulate mRNA selection, yielding the 30S pre-initiation complex (PIC). Upon addition of the 50S ribosomal subunit IF-1, IF-2 and IF-3 are released leaving the mature 70S translation initiation complex. This is Translation initiation factor IF-1 from Legionella pneumophila (strain Paris).